A 700-amino-acid polypeptide reads, in one-letter code: Serine/threonine-protein kinase WNK1 (700 aa).

A Protein kinase domain is found at 24-281 (GRYNEVLGKG…ARELLDDPFL (258 aa)). ATP contacts are provided by residues 104–107 (TELF) and Lys-154. Asp-171 (proton acceptor) is an active-site residue. Over residues 314–339 (NYPSNSSSLNRQYSNGNYPSNSSSLN) the composition is skewed to low complexity. 3 disordered regions span residues 314–345 (NYPSNSSSLNRQYSNGNYPSNSSSLNRQYSNG), 551–575 (ESRELSSIDSGHNHSEEEEEEEVLY), and 647–666 (ESGEEVEISPKDGFLGSVSG). The segment covering 551 to 565 (ESRELSSIDSGHNHS) has biased composition (basic and acidic residues). Positions 566–575 (EEEEEEEVLY) are enriched in acidic residues.

Belongs to the protein kinase superfamily. Ser/Thr protein kinase family. WNK subfamily. Autophosphorylated.

The enzyme catalyses L-seryl-[protein] + ATP = O-phospho-L-seryl-[protein] + ADP + H(+). It carries out the reaction L-threonyl-[protein] + ATP = O-phospho-L-threonyl-[protein] + ADP + H(+). Its function is as follows. Regulates flowering time by modulating the photoperiod pathway. Phosphorylates APRR3. The sequence is that of Serine/threonine-protein kinase WNK1 (WNK1) from Arabidopsis thaliana (Mouse-ear cress).